Reading from the N-terminus, the 37-residue chain is Mating pheromone Er-20 (37 aa).

Cystine bridges form between C3–C18, C10–C32, and C15–C24.

Homodimer.

It localises to the secreted. Mating ciliate pheromones (or gamones) are diffusible extracellular communication signals that distinguish different intraspecific classes of cells commonly referred to as 'mating types'. They prepare the latter for conjugation by changing their cell surface properties. This Euplotes raikovi protein is Mating pheromone Er-20 (MAT20).